Reading from the N-terminus, the 377-residue chain is TraB domain-containing protein (377 aa).

Met1 is modified (N-acetylmethionine). Residues 1 to 34 (MEEPEEQPPHEADTEPVVTSGASEAVPRVLPGDP) form a disordered region. Thr65 carries the post-translational modification Phosphothreonine.

The sequence is that of TraB domain-containing protein (TRABD) from Bos taurus (Bovine).